A 147-amino-acid chain; its full sequence is Large ribosomal subunit protein uL13 (147 aa).

Belongs to the universal ribosomal protein uL13 family. Part of the 50S ribosomal subunit.

This protein is one of the early assembly proteins of the 50S ribosomal subunit, although it is not seen to bind rRNA by itself. It is important during the early stages of 50S assembly. This chain is Large ribosomal subunit protein uL13, found in Rhodococcus jostii (strain RHA1).